A 394-amino-acid chain; its full sequence is Venom metalloproteinase antarease-like TtrivMP_A (394 aa).

Residues 1–16 (MISYLASIFLLATVSA) form the signal peptide. Residues 17–158 (VPSGRVEVVF…AENVSRMAEE (142 aa)) constitute a propeptide that is removed on maturation. Residue Asn151 is glycosylated (N-linked (GlcNAc...) asparagine). One can recognise a Peptidase M12B domain in the interval 162-390 (IVVEYYIVTD…KPTAFCIFEQ (229 aa)). An intrachain disulfide couples Cys295 to Cys386. His319 contributes to the Zn(2+) binding site. Residue Glu320 is part of the active site. Residues His323 and His329 each coordinate Zn(2+).

It belongs to the venom metalloproteinase (M12B) family. Requires Zn(2+) as cofactor. Expressed by the venom gland.

Its subcellular location is the secreted. Its activity is regulated as follows. Inhibited by EDTA. Its function is as follows. Acts as a metalloprotease. Penetrates intact tissue and specifically cleaves the vesicle-associated membrane protein 2 (VAMP2) (part of the SNARE complex) involved in pancreatic secretion, thus disrupting the normal vesicular traffic. The protein is Venom metalloproteinase antarease-like TtrivMP_A of Tityus trivittatus (Argentinean scorpion).